The primary structure comprises 733 residues: Serine/threonine-protein kinase ATG1c (733 aa).

Residues 12-269 (YLVGRQIGSG…FEEFFNHPFL (258 aa)) form the Protein kinase domain. ATP is bound by residues 18–26 (IGSGSFSVV) and Lys41. Asp134 acts as the Proton acceptor in catalysis. Disordered regions lie at residues 292 to 363 (SSGS…ELTS) and 379 to 414 (FETQ…SQDS). Residues 329 to 339 (KKTSSMKSSSG) show a composition bias toward polar residues. Composition is skewed to basic and acidic residues over residues 342-360 (VDTR…KHTE) and 379-393 (FETQ…RREP). The AIM (Atg8-family-interacting motif) signature appears at 419–422 (FVLV). Disordered stretches follow at residues 565–596 (GSPS…SHDG) and 713–733 (HRRS…NRQS). Over residues 566–577 (SPSQDINKLRSS) the composition is skewed to polar residues. Residues 579–596 (LKHDTHSSNKVTDLSHDG) are compositionally biased toward basic and acidic residues. The span at 717-733 (SAGQMQGSSLAMMNRQS) shows a compositional bias: polar residues.

The protein belongs to the protein kinase superfamily. Ser/Thr protein kinase family.

It is found in the cytoplasmic vesicle. Its subcellular location is the autophagosome. Its function is as follows. Serine/threonine protein kinase involved in autophagy. The ATG1-ATG13 protein kinase complex regulates downstream events required for autophagosome enclosure and/or vacuolar delivery. The sequence is that of Serine/threonine-protein kinase ATG1c from Arabidopsis thaliana (Mouse-ear cress).